We begin with the raw amino-acid sequence, 320 residues long: Aspartate carbamoyltransferase catalytic subunit (320 aa).

Residues Arg-53 and Thr-54 each coordinate carbamoyl phosphate. An L-aspartate-binding site is contributed by Lys-82. Carbamoyl phosphate-binding residues include Arg-103, His-131, and Gln-134. L-aspartate is bound by residues Arg-164 and Arg-227. Residues Leu-266 and Pro-267 each coordinate carbamoyl phosphate.

This sequence belongs to the aspartate/ornithine carbamoyltransferase superfamily. ATCase family. Heterododecamer (2C3:3R2) of six catalytic PyrB chains organized as two trimers (C3), and six regulatory PyrI chains organized as three dimers (R2).

It carries out the reaction carbamoyl phosphate + L-aspartate = N-carbamoyl-L-aspartate + phosphate + H(+). It participates in pyrimidine metabolism; UMP biosynthesis via de novo pathway; (S)-dihydroorotate from bicarbonate: step 2/3. Catalyzes the condensation of carbamoyl phosphate and aspartate to form carbamoyl aspartate and inorganic phosphate, the committed step in the de novo pyrimidine nucleotide biosynthesis pathway. This is Aspartate carbamoyltransferase catalytic subunit from Bifidobacterium longum (strain NCC 2705).